The following is a 257-amino-acid chain: Thiazole synthase (257 aa).

The Schiff-base intermediate with DXP role is filled by Lys-100. Residues Gly-161, 187–188 (AG), and 209–210 (NT) contribute to the 1-deoxy-D-xylulose 5-phosphate site.

This sequence belongs to the ThiG family. In terms of assembly, homotetramer. Forms heterodimers with either ThiH or ThiS.

It localises to the cytoplasm. The enzyme catalyses [ThiS sulfur-carrier protein]-C-terminal-Gly-aminoethanethioate + 2-iminoacetate + 1-deoxy-D-xylulose 5-phosphate = [ThiS sulfur-carrier protein]-C-terminal Gly-Gly + 2-[(2R,5Z)-2-carboxy-4-methylthiazol-5(2H)-ylidene]ethyl phosphate + 2 H2O + H(+). It participates in cofactor biosynthesis; thiamine diphosphate biosynthesis. Functionally, catalyzes the rearrangement of 1-deoxy-D-xylulose 5-phosphate (DXP) to produce the thiazole phosphate moiety of thiamine. Sulfur is provided by the thiocarboxylate moiety of the carrier protein ThiS. In vitro, sulfur can be provided by H(2)S. The sequence is that of Thiazole synthase from Pelagibacter ubique (strain HTCC1062).